We begin with the raw amino-acid sequence, 236 residues long: 2-C-methyl-D-erythritol 4-phosphate cytidylyltransferase (236 aa).

Belongs to the IspD/TarI cytidylyltransferase family. IspD subfamily.

It carries out the reaction 2-C-methyl-D-erythritol 4-phosphate + CTP + H(+) = 4-CDP-2-C-methyl-D-erythritol + diphosphate. It functions in the pathway isoprenoid biosynthesis; isopentenyl diphosphate biosynthesis via DXP pathway; isopentenyl diphosphate from 1-deoxy-D-xylulose 5-phosphate: step 2/6. In terms of biological role, catalyzes the formation of 4-diphosphocytidyl-2-C-methyl-D-erythritol from CTP and 2-C-methyl-D-erythritol 4-phosphate (MEP). The chain is 2-C-methyl-D-erythritol 4-phosphate cytidylyltransferase from Paraburkholderia phymatum (strain DSM 17167 / CIP 108236 / LMG 21445 / STM815) (Burkholderia phymatum).